The primary structure comprises 252 residues: Serine/threonine phosphatase stp (252 aa).

The interval 1 to 22 (MHAEFRTDRGRIRHHNEDNGGV) is disordered. Residues 2 to 242 (HAEFRTDRGR…DNITVLLVER (241 aa)) enclose the PPM-type phosphatase domain. D36, G37, D194, and D233 together coordinate Mn(2+).

It belongs to the PP2C family. Mn(2+) is required as a cofactor.

The protein localises to the cytoplasm. The protein resides in the membrane. The catalysed reaction is O-phospho-L-seryl-[protein] + H2O = L-seryl-[protein] + phosphate. It catalyses the reaction O-phospho-L-threonyl-[protein] + H2O = L-threonyl-[protein] + phosphate. Protein phosphatase that dephosphorylates EF-Tu. This Listeria innocua serovar 6a (strain ATCC BAA-680 / CLIP 11262) protein is Serine/threonine phosphatase stp (stp).